We begin with the raw amino-acid sequence, 97 residues long: YcgL domain-containing protein Psyr_1564 (97 aa).

The 85-residue stretch at 3–87 (RICSIYRSPK…AEDDYIEHLP (85 aa)) folds into the YcgL domain.

In Pseudomonas syringae pv. syringae (strain B728a), this protein is YcgL domain-containing protein Psyr_1564.